Here is a 294-residue protein sequence, read N- to C-terminus: UDP-3-O-acyl-N-acetylglucosamine deacetylase (294 aa).

Positions 75, 232, and 236 each coordinate Zn(2+). H259 acts as the Proton donor in catalysis.

It belongs to the LpxC family. The cofactor is Zn(2+).

It catalyses the reaction a UDP-3-O-[(3R)-3-hydroxyacyl]-N-acetyl-alpha-D-glucosamine + H2O = a UDP-3-O-[(3R)-3-hydroxyacyl]-alpha-D-glucosamine + acetate. It participates in glycolipid biosynthesis; lipid IV(A) biosynthesis; lipid IV(A) from (3R)-3-hydroxytetradecanoyl-[acyl-carrier-protein] and UDP-N-acetyl-alpha-D-glucosamine: step 2/6. In terms of biological role, catalyzes the hydrolysis of UDP-3-O-myristoyl-N-acetylglucosamine to form UDP-3-O-myristoylglucosamine and acetate, the committed step in lipid A biosynthesis. The polypeptide is UDP-3-O-acyl-N-acetylglucosamine deacetylase (Campylobacter jejuni subsp. jejuni serotype O:23/36 (strain 81-176)).